The following is a 446-amino-acid chain: Adenylosuccinate synthetase (446 aa).

GTP is bound by residues Gly20 to Lys26 and Gly48 to Thr50. Asp21 serves as the catalytic Proton acceptor. Mg(2+)-binding residues include Asp21 and Gly48. Residues Asp21–Lys24, Asn46–His49, Thr137, Arg151, Gln232, Thr247, and Arg319 each bind IMP. The Proton donor role is filled by His49. Ser315 to Arg321 serves as a coordination point for substrate. Residues Arg321, Lys347–Asp349, and Ser429–Gly431 contribute to the GTP site.

It belongs to the adenylosuccinate synthetase family. Homodimer. Requires Mg(2+) as cofactor.

It is found in the cytoplasm. It carries out the reaction IMP + L-aspartate + GTP = N(6)-(1,2-dicarboxyethyl)-AMP + GDP + phosphate + 2 H(+). Its pathway is purine metabolism; AMP biosynthesis via de novo pathway; AMP from IMP: step 1/2. In terms of biological role, plays an important role in the de novo pathway of purine nucleotide biosynthesis. Catalyzes the first committed step in the biosynthesis of AMP from IMP. In Ralstonia nicotianae (strain ATCC BAA-1114 / GMI1000) (Ralstonia solanacearum), this protein is Adenylosuccinate synthetase.